The primary structure comprises 59 residues: uncharacterized protein (59 aa).

This is an uncharacterized protein from Dictyostelium discoideum (Social amoeba).